The following is a 354-amino-acid chain: Dihydroflavonol 4-reductase (354 aa).

NADP(+) contacts are provided by lysine 44 and tyrosine 163.

Belongs to the NAD(P)-dependent epimerase/dehydratase family. Dihydroflavonol-4-reductase subfamily.

It carries out the reaction a (2R,3S,4S)-leucoanthocyanidin + NADP(+) = a (2R,3R)-dihydroflavonol + NADPH + H(+). It catalyses the reaction (2S)-flavan-4-ol + NADP(+) = (2S)-flavanone + NADPH + H(+). It participates in pigment biosynthesis; anthocyanin biosynthesis. In terms of biological role, bifunctional enzyme involved in flavonoid metabolism. The polypeptide is Dihydroflavonol 4-reductase (ANT18) (Hordeum vulgare (Barley)).